We begin with the raw amino-acid sequence, 418 residues long: Somatostatin receptor type 3 (418 aa).

The tract at residues 1-21 (MDMLHPSSVSTTSEPENASSA) is disordered. Over 1–43 (MDMLHPSSVSTTSEPENASSAWPPDATLGNVSAGPSPAGLAVS) the chain is Extracellular. Over residues 7-20 (SSVSTTSEPENASS) the composition is skewed to polar residues. N-linked (GlcNAc...) asparagine glycosylation is found at N17 and N30. The chain crosses the membrane as a helical span at residues 44–69 (GVLIPLVYLVVCVVGLLGNSLVIYVV). Over 70 to 79 (LRHTASPSVT) the chain is Cytoplasmic. Residues 80–101 (NVYILNLALADELFMLGLPFLA) traverse the membrane as a helical segment. At 102–116 (AQNALSYWPFGSLMC) the chain is on the extracellular side. C116 and C191 are joined by a disulfide. Residues 117–138 (RLVMAVDGINQFTSIFCLTVMS) form a helical membrane-spanning segment. Residues 139–161 (VDRYLAVVHPTRSARWRTAPVAR) are Cytoplasmic-facing. The helical transmembrane segment at 162–181 (TVSAAVWVASAVVVLPVVVF) threads the bilayer. Over 182-205 (SGVPRGMSTCHMQWPEPAAAWRAG) the chain is Extracellular. A helical transmembrane segment spans residues 206–231 (FIIYTAALGFFGPLLVICLCYLLIVV). Topologically, residues 232–257 (KVRSAGRRVWAPSCQRRRRSERRVTR) are cytoplasmic. Residues 258–279 (MVVAVVALFVLCWMPFYVLNIV) traverse the membrane as a helical segment. The Extracellular segment spans residues 280–293 (NVVCPLPEEPAFFG). Residues 294 to 316 (LYFLVVALPYANSCANPILYGFL) form a helical membrane-spanning segment. Residues 317–418 (SYRFKQGFRR…KSSTMRISYL (102 aa)) lie on the Cytoplasmic side of the membrane. Phosphoserine is present on residues S332 and S337. A disordered region spans residues 335 to 418 (VRSQEPTVGP…KSSTMRISYL (84 aa)). Residue T348 is modified to Phosphothreonine. Residues 348 to 360 (TEEEDEEEEDGEE) show a composition bias toward acidic residues. The segment covering 361-371 (SREGGKGKEMN) has biased composition (basic and acidic residues). 2 stretches are compositionally biased toward polar residues: residues 373–385 (RVSQ…TSGQ) and 395–418 (KEQQ…ISYL).

This sequence belongs to the G-protein coupled receptor 1 family. Homodimer and heterodimer with SSTR2. Heterodimerization with SSTR2 inactivates SSTR3 receptor function. In terms of processing, phosphorylated. Phosphorylation increases upon somatostatin binding. Brain, pituitary and pancreas.

It is found in the cell membrane. In terms of biological role, receptor for somatostatin-14 and -28. This receptor is coupled via pertussis toxin sensitive G proteins to inhibition of adenylyl cyclase. The protein is Somatostatin receptor type 3 (SSTR3) of Homo sapiens (Human).